Here is a 129-residue protein sequence, read N- to C-terminus: Small ribosomal subunit protein uS11 (129 aa).

Belongs to the universal ribosomal protein uS11 family. Part of the 30S ribosomal subunit. Interacts with proteins S7 and S18. Binds to IF-3.

Located on the platform of the 30S subunit, it bridges several disparate RNA helices of the 16S rRNA. Forms part of the Shine-Dalgarno cleft in the 70S ribosome. This chain is Small ribosomal subunit protein uS11, found in Agrobacterium fabrum (strain C58 / ATCC 33970) (Agrobacterium tumefaciens (strain C58)).